The following is a 278-amino-acid chain: Anamorsin homolog (278 aa).

Residues 1–147 (MESVSHLVSN…EIGSSAALPF (147 aa)) form an N-terminal SAM-like domain region. Residues 147 to 191 (FANKISLGGNSKMETAKMWTLSSQDFVDDDIDIIDENTLIEEDDF) are linker. C204, C214, C217, and C219 together coordinate [2Fe-2S] cluster. Residues 204–219 (CDSAKKKRKACKNCSC) form a fe-S binding site A region. The [4Fe-4S] cluster site is built by C239, C242, C250, and C253. Short sequence motifs (cx2C motif) lie at residues 239 to 242 (CGSC) and 250 to 253 (CSSC). A fe-S binding site B region spans residues 239-253 (CGSCYLGDAFRCSSC).

It belongs to the anamorsin family. In terms of assembly, monomer. Requires [2Fe-2S] cluster as cofactor. The cofactor is [4Fe-4S] cluster.

It is found in the cytoplasm. Its subcellular location is the mitochondrion intermembrane space. Its function is as follows. Component of the cytosolic iron-sulfur (Fe-S) protein assembly (CIA) machinery. Required for the maturation of extramitochondrial Fe-S proteins. Part of an electron transfer chain functioning in an early step of cytosolic Fe-S biogenesis, facilitating the de novo assembly of a [4Fe-4S] cluster on the cytosolic Fe-S scaffold complex. Electrons are transferred from NADPH via a FAD- and FMN-containing diflavin oxidoreductase. Together with the diflavin oxidoreductase, also required for the assembly of the diferric tyrosyl radical cofactor of ribonucleotide reductase (RNR), probably by providing electrons for reduction during radical cofactor maturation in the catalytic small subunit. This chain is Anamorsin homolog, found in Trichoplax adhaerens (Trichoplax reptans).